A 987-amino-acid polypeptide reads, in one-letter code: uncharacterized protein (987 aa).

A run of 2 helical transmembrane segments spans residues 12–32 (FIYL…SVSG) and 958–978 (VENN…LGIL).

To M.jannaschii MJ1393 and A.fulgidus AF2028.

Its subcellular location is the cell membrane. This is an uncharacterized protein from Methanocaldococcus jannaschii (strain ATCC 43067 / DSM 2661 / JAL-1 / JCM 10045 / NBRC 100440) (Methanococcus jannaschii).